We begin with the raw amino-acid sequence, 68 residues long: Large ribosomal subunit protein bL32 (68 aa).

The interval 1–20 (MAVPQNRVTRSRRNMRRSHD) is disordered.

This sequence belongs to the bacterial ribosomal protein bL32 family.

The sequence is that of Large ribosomal subunit protein bL32 from Cereibacter sphaeroides (strain ATCC 17029 / ATH 2.4.9) (Rhodobacter sphaeroides).